The primary structure comprises 309 residues: MALTIDKKAIQPINTLPLITRSYNLLQDYLAISKFKVVAMLVLTAWVGLALAPDVGRGMGVQFISLLGIGLLSAAAAVINHVVDSEIDSKMARTRHRPVAKGRLSKAHALSFAAIIGVAGFIMLMLWANTLTAILTLFALVGYAFVYTSFLKRATPQNIVIGGLAGAMPPLLGWVSETGQMAAAPWLLVMIIFTWTPPHFWALAIARKSDYARAKIPMLPVTHGIDFSKTCVVAYSVLLAIVCIFPYLIGMSGLIYLIGASGLNAVFIYKAIKLKLAANDDTAMDLFRFSIIHLMVLFIILFIDKWLLL.

8 consecutive transmembrane segments (helical) span residues 35–55, 59–79, 107–127, 131–151, 159–179, 186–206, 238–258, and 289–309; these read FKVV…APDV, MGVQ…AAVI, AHAL…LMLW, LTAI…TSFL, IVIG…SETG, WLLV…LAIA, LLAI…IYLI, and FSII…WLLL.

It belongs to the UbiA prenyltransferase family. Protoheme IX farnesyltransferase subfamily.

Its subcellular location is the cell inner membrane. It carries out the reaction heme b + (2E,6E)-farnesyl diphosphate + H2O = Fe(II)-heme o + diphosphate. The protein operates within porphyrin-containing compound metabolism; heme O biosynthesis; heme O from protoheme: step 1/1. In terms of biological role, converts heme B (protoheme IX) to heme O by substitution of the vinyl group on carbon 2 of heme B porphyrin ring with a hydroxyethyl farnesyl side group. The polypeptide is Protoheme IX farnesyltransferase 2 (Pseudoalteromonas translucida (strain TAC 125)).